Reading from the N-terminus, the 342-residue chain is Uroporphyrinogen decarboxylase (342 aa).

Substrate contacts are provided by residues 22–26 (RQAGR), phenylalanine 41, aspartate 72, tyrosine 146, serine 201, and histidine 317.

The protein belongs to the uroporphyrinogen decarboxylase family. Homodimer.

The protein localises to the cytoplasm. The catalysed reaction is uroporphyrinogen III + 4 H(+) = coproporphyrinogen III + 4 CO2. The protein operates within porphyrin-containing compound metabolism; protoporphyrin-IX biosynthesis; coproporphyrinogen-III from 5-aminolevulinate: step 4/4. Catalyzes the decarboxylation of four acetate groups of uroporphyrinogen-III to yield coproporphyrinogen-III. This chain is Uroporphyrinogen decarboxylase, found in Orientia tsutsugamushi (strain Boryong) (Rickettsia tsutsugamushi).